A 149-amino-acid chain; its full sequence is D-aminoacyl-tRNA deacylase (149 aa).

The short motif at 137–138 is the Gly-cisPro motif, important for rejection of L-amino acids element; sequence GP.

It belongs to the DTD family. As to quaternary structure, homodimer.

Its subcellular location is the cytoplasm. The enzyme catalyses glycyl-tRNA(Ala) + H2O = tRNA(Ala) + glycine + H(+). It carries out the reaction a D-aminoacyl-tRNA + H2O = a tRNA + a D-alpha-amino acid + H(+). Functionally, an aminoacyl-tRNA editing enzyme that deacylates mischarged D-aminoacyl-tRNAs. Also deacylates mischarged glycyl-tRNA(Ala), protecting cells against glycine mischarging by AlaRS. Acts via tRNA-based rather than protein-based catalysis; rejects L-amino acids rather than detecting D-amino acids in the active site. By recycling D-aminoacyl-tRNA to D-amino acids and free tRNA molecules, this enzyme counteracts the toxicity associated with the formation of D-aminoacyl-tRNA entities in vivo and helps enforce protein L-homochirality. The polypeptide is D-aminoacyl-tRNA deacylase (Clostridium botulinum (strain Loch Maree / Type A3)).